Here is a 505-residue protein sequence, read N- to C-terminus: RNA-splicing ligase RtcB homolog (505 aa).

Mn(2+)-binding residues include Asp-119, Cys-122, His-227, and His-259. GMP is bound at residue 226–230 (NHYAE). Ser-300 carries the post-translational modification Phosphoserine. His-353 provides a ligand contact to Mn(2+). GMP is bound by residues 353 to 354 (HN), 402 to 405 (GGTM), Ser-409, and 428 to 431 (HGAG). The active-site GMP-histidine intermediate is the His-428. Residue Lys-496 forms a Glycyl lysine isopeptide (Lys-Gly) (interchain with G-Cter in SUMO2) linkage. Lys-504 contributes to the GMP binding site.

The protein belongs to the RtcB family. In terms of assembly, catalytic component of the tRNA-splicing ligase complex. Mn(2+) serves as cofactor.

The protein localises to the nucleus. It is found in the cytoplasm. The enzyme catalyses a 3'-end 3'-phospho-ribonucleotide-RNA + a 5'-end dephospho-ribonucleoside-RNA + GTP = a ribonucleotidyl-ribonucleotide-RNA + GMP + diphosphate. The catalysed reaction is a 3'-end 2',3'-cyclophospho-ribonucleotide-RNA + a 5'-end dephospho-ribonucleoside-RNA + GTP + H2O = a ribonucleotidyl-ribonucleotide-RNA + GMP + diphosphate + H(+). Functionally, catalytic subunit of the tRNA-splicing ligase complex that acts by directly joining spliced tRNA halves to mature-sized tRNAs by incorporating the precursor-derived splice junction phosphate into the mature tRNA as a canonical 3',5'-phosphodiester. May act as an RNA ligase with broad substrate specificity, and may function toward other RNAs. The protein is RNA-splicing ligase RtcB homolog of Macaca fascicularis (Crab-eating macaque).